A 299-amino-acid chain; its full sequence is Protein N-terminal and lysine N-methyltransferase EFM7 (299 aa).

S-adenosyl-L-methionine is bound by residues Trp-74, 100-102, Asp-122, Trp-155, and Ser-178; that span reads GAG.

The protein belongs to the class I-like SAM-binding methyltransferase superfamily. EFM7 family.

It is found in the cytoplasm. S-adenosyl-L-methionine-dependent protein methyltransferase that trimethylates the N-terminal glycine 'Gly-2' of elongation factor 1-alpha, before also catalyzing the mono- and dimethylation of 'Lys-3'. This is Protein N-terminal and lysine N-methyltransferase EFM7 from Cryptococcus neoformans var. neoformans serotype D (strain B-3501A) (Filobasidiella neoformans).